Here is a 49-residue protein sequence, read N- to C-terminus: Agglutinin-1 (49 aa).

As to quaternary structure, homooligomer. Glycosylated.

Beta-galactoside specific lectin. Has a hemagglutinating activity on erythrocytes. In Pomacea flagellata (Apple snail), this protein is Agglutinin-1.